Consider the following 179-residue polypeptide: Apoptosis regulator DPV022 (179 aa).

A helical transmembrane segment spans residues 148 to 170 (VLITNYLKITIFGAILGITAYYI).

As to quaternary structure, interacts with host BAX and BAK1.

The protein localises to the host mitochondrion. Its subcellular location is the host membrane. In terms of biological role, plays a role in the inhibition of host apoptosis by sequestering and inactivating several proapoptotic BCL-2 proteins, including BAK1 and BAX. Prevents the conformational activation of both of them. This chain is Apoptosis regulator DPV022 (DPV022), found in Deerpox virus (strain Mule deer/United States/W-848-83/1983) (DPV).